Reading from the N-terminus, the 222-residue chain is Large ribosomal subunit protein uL4 (222 aa).

A disordered region spans residues 50–72; it reads TRGRSEVSHSTRKPFRQKGTGNA.

Belongs to the universal ribosomal protein uL4 family. Part of the 50S ribosomal subunit.

In terms of biological role, one of the primary rRNA binding proteins, this protein initially binds near the 5'-end of the 23S rRNA. It is important during the early stages of 50S assembly. It makes multiple contacts with different domains of the 23S rRNA in the assembled 50S subunit and ribosome. Its function is as follows. Forms part of the polypeptide exit tunnel. The protein is Large ribosomal subunit protein uL4 of Chlamydia muridarum (strain MoPn / Nigg).